The sequence spans 274 residues: Bis(5'-nucleosyl)-tetraphosphatase, symmetrical (274 aa).

It belongs to the Ap4A hydrolase family.

The enzyme catalyses P(1),P(4)-bis(5'-adenosyl) tetraphosphate + H2O = 2 ADP + 2 H(+). In terms of biological role, hydrolyzes diadenosine 5',5'''-P1,P4-tetraphosphate to yield ADP. This chain is Bis(5'-nucleosyl)-tetraphosphatase, symmetrical, found in Shewanella baltica (strain OS185).